Consider the following 222-residue polypeptide: GTP cyclohydrolase 1 (222 aa).

Zn(2+) is bound by residues Cys-111, His-114, and Cys-182.

The protein belongs to the GTP cyclohydrolase I family. Homomer.

It catalyses the reaction GTP + H2O = 7,8-dihydroneopterin 3'-triphosphate + formate + H(+). Its pathway is cofactor biosynthesis; 7,8-dihydroneopterin triphosphate biosynthesis; 7,8-dihydroneopterin triphosphate from GTP: step 1/1. This is GTP cyclohydrolase 1 from Shigella boydii serotype 18 (strain CDC 3083-94 / BS512).